We begin with the raw amino-acid sequence, 257 residues long: Zinc transporter ZupT (257 aa).

3 helical membrane-spanning segments follow: residues 5-25 (LILTILAGAATFIGAFLGVLG), 32-52 (LLAFSLGFAAGIMLLISLMEM), and 61-81 (GMSPVLGYGMFIFGLLGYFGL). The Fe(2+) site is built by asparagine 120 and glutamate 123. Glutamate 123 and histidine 148 together coordinate Zn(2+). Helical transmembrane passes span 137 to 157 (LGFGIALAVALHNIPEGLAVA), 171 to 191 (ILWAGISGLAEILGGVLAWLI), 195 to 215 (MISPVVMAAIMAAVAGIMVAL), and 236 to 256 (GVLCGMSVMGFSLVLLQTAGI). Fe(2+) contacts are provided by asparagine 149, glutamate 152, and glutamate 181. Glutamate 152 provides a ligand contact to Zn(2+).

Belongs to the ZIP transporter (TC 2.A.5) family. ZupT subfamily.

The protein resides in the cell inner membrane. The catalysed reaction is Zn(2+)(in) = Zn(2+)(out). Mediates zinc uptake. May also transport other divalent cations. In Escherichia coli O127:H6 (strain E2348/69 / EPEC), this protein is Zinc transporter ZupT.